The following is a 228-amino-acid chain: Small ribosomal subunit protein uS2c (228 aa).

This sequence belongs to the universal ribosomal protein uS2 family.

The protein resides in the plastid. The protein localises to the chloroplast. The chain is Small ribosomal subunit protein uS2c (rps2) from Mesostigma viride (Green alga).